Reading from the N-terminus, the 322-residue chain is tRNA uridine(34) hydroxylase (322 aa).

A Rhodanese domain is found at 126–220 (LAEDTVVIDA…YGKDPEVKGE (95 aa)). The active-site Cysteine persulfide intermediate is cysteine 180.

This sequence belongs to the TrhO family.

The catalysed reaction is uridine(34) in tRNA + AH2 + O2 = 5-hydroxyuridine(34) in tRNA + A + H2O. Its function is as follows. Catalyzes oxygen-dependent 5-hydroxyuridine (ho5U) modification at position 34 in tRNAs. This chain is tRNA uridine(34) hydroxylase, found in Shouchella clausii (strain KSM-K16) (Alkalihalobacillus clausii).